The sequence spans 295 residues: Protease HtpX (295 aa).

Helical transmembrane passes span 4 to 24 (IVLF…ILSL) and 34 to 54 (GLMI…LLMS). Residue His-139 participates in Zn(2+) binding. Residue Glu-140 is part of the active site. Residue His-143 coordinates Zn(2+). 2 consecutive transmembrane segments (helical) span residues 147-167 (GDMV…IFIS) and 194-214 (IVYM…ASII). Glu-223 is a Zn(2+) binding site.

It belongs to the peptidase M48B family. Zn(2+) serves as cofactor.

Its subcellular location is the cell inner membrane. The polypeptide is Protease HtpX (Photorhabdus laumondii subsp. laumondii (strain DSM 15139 / CIP 105565 / TT01) (Photorhabdus luminescens subsp. laumondii)).